A 679-amino-acid chain; its full sequence is Methionine--tRNA ligase (679 aa).

The short motif at 15 to 25 (PYANGPVHIGH) is the 'HIGH' region element. Residues C147, C150, C160, and C163 each coordinate Zn(2+). The 'KMSKS' region signature appears at 332–336 (KISTS). T335 provides a ligand contact to ATP. The tRNA-binding domain maps to 578–679 (DFMKLDIRVG…REVKPGSEVK (102 aa)).

Belongs to the class-I aminoacyl-tRNA synthetase family. MetG type 1 subfamily. In terms of assembly, homodimer. It depends on Zn(2+) as a cofactor.

Its subcellular location is the cytoplasm. The catalysed reaction is tRNA(Met) + L-methionine + ATP = L-methionyl-tRNA(Met) + AMP + diphosphate. Its function is as follows. Is required not only for elongation of protein synthesis but also for the initiation of all mRNA translation through initiator tRNA(fMet) aminoacylation. The sequence is that of Methionine--tRNA ligase from Bacteroides fragilis (strain ATCC 25285 / DSM 2151 / CCUG 4856 / JCM 11019 / LMG 10263 / NCTC 9343 / Onslow / VPI 2553 / EN-2).